A 121-amino-acid polypeptide reads, in one-letter code: Ribosome-binding factor A (121 aa).

It belongs to the RbfA family. As to quaternary structure, monomer. Binds 30S ribosomal subunits, but not 50S ribosomal subunits or 70S ribosomes.

The protein localises to the cytoplasm. One of several proteins that assist in the late maturation steps of the functional core of the 30S ribosomal subunit. Associates with free 30S ribosomal subunits (but not with 30S subunits that are part of 70S ribosomes or polysomes). Required for efficient processing of 16S rRNA. May interact with the 5'-terminal helix region of 16S rRNA. This is Ribosome-binding factor A from Paraburkholderia phytofirmans (strain DSM 17436 / LMG 22146 / PsJN) (Burkholderia phytofirmans).